The following is a 402-amino-acid chain: Tyrosine-protein kinase transforming protein ros (402 aa).

In terms of domain architecture, Protein kinase spans 98–377; the sequence is LNLHKLLGSG…KLQEIRHSPL (280 aa). Residues 104–112 and lysine 133 each bind ATP; that span reads LGSGAFGEV. The Proton acceptor role is filled by aspartate 232. Position 268 is a phosphotyrosine; by autocatalysis (tyrosine 268).

The protein belongs to the protein kinase superfamily. Tyr protein kinase family. Insulin receptor subfamily.

The enzyme catalyses L-tyrosyl-[protein] + ATP = O-phospho-L-tyrosyl-[protein] + ADP + H(+). The polypeptide is Tyrosine-protein kinase transforming protein ros (V-ROS) (Galliformes (UR2SV)).